Consider the following 305-residue polypeptide: NAD kinase (305 aa).

Catalysis depends on aspartate 82, which acts as the Proton acceptor. NAD(+)-binding positions include 82–83 (DG), 156–157 (ND), arginine 184, aspartate 186, 197–202 (TAYALS), alanine 221, and glutamine 255.

It belongs to the NAD kinase family. A divalent metal cation is required as a cofactor.

The protein localises to the cytoplasm. It catalyses the reaction NAD(+) + ATP = ADP + NADP(+) + H(+). Involved in the regulation of the intracellular balance of NAD and NADP, and is a key enzyme in the biosynthesis of NADP. Catalyzes specifically the phosphorylation on 2'-hydroxyl of the adenosine moiety of NAD to yield NADP. In Cupriavidus pinatubonensis (strain JMP 134 / LMG 1197) (Cupriavidus necator (strain JMP 134)), this protein is NAD kinase.